The sequence spans 858 residues: Phosphoenolpyruvate carboxylase (858 aa).

Catalysis depends on residues H145 and K531.

This sequence belongs to the PEPCase type 1 family. Mg(2+) is required as a cofactor.

It carries out the reaction oxaloacetate + phosphate = phosphoenolpyruvate + hydrogencarbonate. In terms of biological role, forms oxaloacetate, a four-carbon dicarboxylic acid source for the tricarboxylic acid cycle. The protein is Phosphoenolpyruvate carboxylase of Thermus thermophilus (strain ATCC BAA-163 / DSM 7039 / HB27).